Here is a 352-residue protein sequence, read N- to C-terminus: UDP-N-acetylglucosamine--N-acetylmuramyl-(pentapeptide) pyrophosphoryl-undecaprenol N-acetylglucosamine transferase 2 (352 aa).

UDP-N-acetyl-alpha-D-glucosamine is bound by residues 11–13 (SAG), Arg-164, Ser-194, and Gln-289.

The protein belongs to the glycosyltransferase 28 family. MurG subfamily.

The protein resides in the cell membrane. The catalysed reaction is di-trans,octa-cis-undecaprenyl diphospho-N-acetyl-alpha-D-muramoyl-L-alanyl-D-glutamyl-meso-2,6-diaminopimeloyl-D-alanyl-D-alanine + UDP-N-acetyl-alpha-D-glucosamine = di-trans,octa-cis-undecaprenyl diphospho-[N-acetyl-alpha-D-glucosaminyl-(1-&gt;4)]-N-acetyl-alpha-D-muramoyl-L-alanyl-D-glutamyl-meso-2,6-diaminopimeloyl-D-alanyl-D-alanine + UDP + H(+). Its pathway is cell wall biogenesis; peptidoglycan biosynthesis. Cell wall formation. Catalyzes the transfer of a GlcNAc subunit on undecaprenyl-pyrophosphoryl-MurNAc-pentapeptide (lipid intermediate I) to form undecaprenyl-pyrophosphoryl-MurNAc-(pentapeptide)GlcNAc (lipid intermediate II). This Bacillus cereus (strain ATCC 10987 / NRS 248) protein is UDP-N-acetylglucosamine--N-acetylmuramyl-(pentapeptide) pyrophosphoryl-undecaprenol N-acetylglucosamine transferase 2.